A 381-amino-acid polypeptide reads, in one-letter code: Dual-specificity RNA methyltransferase RlmN (381 aa).

Residue E96 is the Proton acceptor of the active site. Residues T102–D342 enclose the Radical SAM core domain. C109 and C345 are oxidised to a cystine. Residues C116, C120, and C123 each coordinate [4Fe-4S] cluster. S-adenosyl-L-methionine-binding positions include G170–E171, S202, S224–H226, and N302. C345 acts as the S-methylcysteine intermediate in catalysis.

Belongs to the radical SAM superfamily. RlmN family. The cofactor is [4Fe-4S] cluster.

It localises to the cytoplasm. The enzyme catalyses adenosine(2503) in 23S rRNA + 2 reduced [2Fe-2S]-[ferredoxin] + 2 S-adenosyl-L-methionine = 2-methyladenosine(2503) in 23S rRNA + 5'-deoxyadenosine + L-methionine + 2 oxidized [2Fe-2S]-[ferredoxin] + S-adenosyl-L-homocysteine. The catalysed reaction is adenosine(37) in tRNA + 2 reduced [2Fe-2S]-[ferredoxin] + 2 S-adenosyl-L-methionine = 2-methyladenosine(37) in tRNA + 5'-deoxyadenosine + L-methionine + 2 oxidized [2Fe-2S]-[ferredoxin] + S-adenosyl-L-homocysteine. In terms of biological role, specifically methylates position 2 of adenine 2503 in 23S rRNA and position 2 of adenine 37 in tRNAs. m2A2503 modification seems to play a crucial role in the proofreading step occurring at the peptidyl transferase center and thus would serve to optimize ribosomal fidelity. The protein is Dual-specificity RNA methyltransferase RlmN of Pseudomonas putida (strain GB-1).